A 65-amino-acid chain; its full sequence is Large ribosomal subunit protein bL35 (65 aa).

Over residues 1–43 (MPKMKTRRGAAKRFAKTGSGKFKRRKQGLRHILTKKTAKRKSR) the composition is skewed to basic residues. Residues 1–49 (MPKMKTRRGAAKRFAKTGSGKFKRRKQGLRHILTKKTAKRKSRLGQSAT) are disordered.

The protein belongs to the bacterial ribosomal protein bL35 family.

The protein is Large ribosomal subunit protein bL35 of Maridesulfovibrio salexigens (strain ATCC 14822 / DSM 2638 / NCIMB 8403 / VKM B-1763) (Desulfovibrio salexigens).